A 777-amino-acid chain; its full sequence is Mediator of RNA polymerase II transcription subunit 15 (777 aa).

Disordered regions lie at residues 120-139 (MNLP…HGIT) and 418-520 (SIPV…EEQQ). The segment covering 420–434 (PVMSSPSPVQQVQTP) has biased composition (low complexity). Residues 435 to 448 (QPMPPPPQPSPQPS) are compositionally biased toward pro residues. A compositionally biased stretch (low complexity) spans 449 to 471 (QPMSQPNSNVSSGPAPSPSSFMP). Over residues 500–519 (TPGNPNSVMSPASNNQSEEQ) the composition is skewed to polar residues.

Belongs to the Mediator complex subunit 15 family. In terms of assembly, component of the Mediator complex. Interacts with srebf1 and srebf2. Interacts with smad2, smad3 and smad4.

It localises to the cytoplasm. It is found in the nucleus. In terms of biological role, component of the Mediator complex, a coactivator involved in the regulated transcription of nearly all RNA polymerase II-dependent genes. Mediator functions as a bridge to convey information from gene-specific regulatory proteins to the basal RNA polymerase II transcription machinery. Mediator is recruited to promoters by direct interactions with regulatory proteins and serves as a scaffold for the assembly of a functional preinitiation complex with RNA polymerase II and the general transcription factors. Required for cholesterol-dependent gene regulation. Positively regulates the Nodal signaling pathway. In Xenopus laevis (African clawed frog), this protein is Mediator of RNA polymerase II transcription subunit 15 (med15).